The primary structure comprises 489 residues: Glutamyl-tRNA(Gln) amidotransferase subunit A (489 aa).

Active-site charge relay system residues include K80 and S160. The Acyl-ester intermediate role is filled by S184.

It belongs to the amidase family. GatA subfamily. Heterotrimer of A, B and C subunits.

It catalyses the reaction L-glutamyl-tRNA(Gln) + L-glutamine + ATP + H2O = L-glutaminyl-tRNA(Gln) + L-glutamate + ADP + phosphate + H(+). Allows the formation of correctly charged Gln-tRNA(Gln) through the transamidation of misacylated Glu-tRNA(Gln) in organisms which lack glutaminyl-tRNA synthetase. The reaction takes place in the presence of glutamine and ATP through an activated gamma-phospho-Glu-tRNA(Gln). In Wolbachia sp. subsp. Brugia malayi (strain TRS), this protein is Glutamyl-tRNA(Gln) amidotransferase subunit A.